The sequence spans 331 residues: Fructose-1,6-bisphosphatase class 1 (331 aa).

The Mg(2+) site is built by Glu100, Asp120, Leu122, and Asp123. Substrate contacts are provided by residues Asp123–Ser126, Asn216, Tyr243, Tyr261–Tyr263, and Lys273. Position 279 (Glu279) interacts with Mg(2+).

This sequence belongs to the FBPase class 1 family. In terms of assembly, homotetramer. Mg(2+) serves as cofactor.

It localises to the cytoplasm. The enzyme catalyses beta-D-fructose 1,6-bisphosphate + H2O = beta-D-fructose 6-phosphate + phosphate. It functions in the pathway carbohydrate biosynthesis; gluconeogenesis. In Amoebophilus asiaticus (strain 5a2), this protein is Fructose-1,6-bisphosphatase class 1.